An 87-amino-acid chain; its full sequence is UPF0335 protein Avi_3695 (87 aa).

Belongs to the UPF0335 family.

This chain is UPF0335 protein Avi_3695, found in Allorhizobium ampelinum (strain ATCC BAA-846 / DSM 112012 / S4) (Agrobacterium vitis (strain S4)).